The chain runs to 212 residues: 2,3-bisphosphoglycerate-dependent phosphoglycerate mutase (212 aa).

Substrate contacts are provided by residues 9–16, 22–23, Arg61, 88–91, Lys99, 115–116, and 159–160; these read RHGQSEWN, TG, ERDY, RR, and GN. His10 functions as the Tele-phosphohistidine intermediate in the catalytic mechanism. Glu88 (proton donor/acceptor) is an active-site residue.

The protein belongs to the phosphoglycerate mutase family. BPG-dependent PGAM subfamily. Homodimer.

It catalyses the reaction (2R)-2-phosphoglycerate = (2R)-3-phosphoglycerate. It participates in carbohydrate degradation; glycolysis; pyruvate from D-glyceraldehyde 3-phosphate: step 3/5. Catalyzes the interconversion of 2-phosphoglycerate and 3-phosphoglycerate. The sequence is that of 2,3-bisphosphoglycerate-dependent phosphoglycerate mutase from Methylobacterium radiotolerans (strain ATCC 27329 / DSM 1819 / JCM 2831 / NBRC 15690 / NCIMB 10815 / 0-1).